An 87-amino-acid chain; its full sequence is U3-theraphotoxin-Hhn1j (87 aa).

Residues 1-24 form the signal peptide; that stretch reads MVNMKASMFLTFAGLVLLFVVCYA. The propeptide occupies 25 to 52; it reads SESEEKEFPKEMLSSIFAVDNDFKQEER. Intrachain disulfides connect Cys-54–Cys-67, Cys-61–Cys-72, and Cys-66–Cys-79.

The protein belongs to the neurotoxin 10 (Hwtx-1) family. 51 (Hntx-8) subfamily. Hntx-8 sub-subfamily. Expressed by the venom gland.

Its subcellular location is the secreted. Ion channel inhibitor. This Cyriopagopus hainanus (Chinese bird spider) protein is U3-theraphotoxin-Hhn1j.